Reading from the N-terminus, the 284-residue chain is Pantothenate synthetase (284 aa).

Residue 30 to 37 (MGNLHQGH) participates in ATP binding. His-37 functions as the Proton donor in the catalytic mechanism. Position 61 (Gln-61) interacts with (R)-pantoate. Gln-61 serves as a coordination point for beta-alanine. 149–152 (GQKD) provides a ligand contact to ATP. Gln-155 serves as a coordination point for (R)-pantoate. Residues Val-178 and 186-189 (LSSR) each bind ATP.

It belongs to the pantothenate synthetase family. Homodimer.

It localises to the cytoplasm. It catalyses the reaction (R)-pantoate + beta-alanine + ATP = (R)-pantothenate + AMP + diphosphate + H(+). The protein operates within cofactor biosynthesis; (R)-pantothenate biosynthesis; (R)-pantothenate from (R)-pantoate and beta-alanine: step 1/1. Its function is as follows. Catalyzes the condensation of pantoate with beta-alanine in an ATP-dependent reaction via a pantoyl-adenylate intermediate. The chain is Pantothenate synthetase from Aeromonas salmonicida (strain A449).